Here is a 356-residue protein sequence, read N- to C-terminus: UDP-N-acetylglucosamine--N-acetylmuramyl-(pentapeptide) pyrophosphoryl-undecaprenol N-acetylglucosamine transferase (356 aa).

Residues Arg-166, Ser-196, and Gln-290 each contribute to the UDP-N-acetyl-alpha-D-glucosamine site.

This sequence belongs to the glycosyltransferase 28 family. MurG subfamily.

It is found in the cell membrane. It carries out the reaction Mur2Ac(oyl-L-Ala-gamma-D-Glu-L-Lys-D-Ala-D-Ala)-di-trans,octa-cis-undecaprenyl diphosphate + UDP-N-acetyl-alpha-D-glucosamine = beta-D-GlcNAc-(1-&gt;4)-Mur2Ac(oyl-L-Ala-gamma-D-Glu-L-Lys-D-Ala-D-Ala)-di-trans,octa-cis-undecaprenyl diphosphate + UDP + H(+). It participates in cell wall biogenesis; peptidoglycan biosynthesis. In terms of biological role, cell wall formation. Catalyzes the transfer of a GlcNAc subunit on undecaprenyl-pyrophosphoryl-MurNAc-pentapeptide (lipid intermediate I) to form undecaprenyl-pyrophosphoryl-MurNAc-(pentapeptide)GlcNAc (lipid intermediate II). This is UDP-N-acetylglucosamine--N-acetylmuramyl-(pentapeptide) pyrophosphoryl-undecaprenol N-acetylglucosamine transferase from Staphylococcus aureus (strain MW2).